Reading from the N-terminus, the 697-residue chain is Pentatricopeptide repeat-containing protein At5g46460, mitochondrial (697 aa).

The N-terminal 36 residues, 1–36, are a transit peptide targeting the mitochondrion; that stretch reads MWSRAIFQRFRFRAFSISHVIHGKCYRSFSVTVEFQ. PPR repeat units lie at residues 39–64, 65–95, 96–130, 131–157, 158–192, 193–223, 224–258, 259–289, 290–324, 325–359, 360–390, 391–425, 426–456, and 463–497; these read EVLI…VPSP, HVSL…MPVR, DVVS…SVVS, WTAM…MPVK, DTAA…NVIS, WTTM…CIKS, TSRP…GFLY, EEYV…KVHE, QVAV…SILP, NQST…GLET, DAFV…IFKK, SIVS…NKEP, DEIT…MSSG, and KIQH…PNEM. The interval 498 to 573 is type E motif; sequence VWLALLSACR…KPGSSWVVIR (76 aa). Positions 574 to 602 are type E(+) motif; that stretch reads GKKHEFFSGDQPHCSRIYEKLEFLREKLK. The segment at 603–697 is type DYW motif; it reads ELGYAPDYRS…NGTCSCGDYW (95 aa).

The protein belongs to the PPR family. PCMP-H subfamily.

The protein localises to the mitochondrion. The chain is Pentatricopeptide repeat-containing protein At5g46460, mitochondrial (PCMP-H49) from Arabidopsis thaliana (Mouse-ear cress).